Reading from the N-terminus, the 230-residue chain is Large ribosomal subunit protein uL1 (230 aa).

The protein belongs to the universal ribosomal protein uL1 family. In terms of assembly, part of the 50S ribosomal subunit.

Functionally, binds directly to 23S rRNA. The L1 stalk is quite mobile in the ribosome, and is involved in E site tRNA release. In terms of biological role, protein L1 is also a translational repressor protein, it controls the translation of the L11 operon by binding to its mRNA. This is Large ribosomal subunit protein uL1 from Limosilactobacillus reuteri subsp. reuteri (strain JCM 1112) (Lactobacillus reuteri).